The sequence spans 409 residues: Multifunctional CCA protein (409 aa).

2 residues coordinate ATP: G8 and R11. CTP-binding residues include G8 and R11. Positions 21 and 23 each coordinate Mg(2+). ATP is bound by residues R91, R137, and R140. Residues R91, R137, and R140 each coordinate CTP. The 102-residue stretch at 228–329 folds into the HD domain; sequence TGVHTLSVLE…LELLQSFDVY (102 aa).

It belongs to the tRNA nucleotidyltransferase/poly(A) polymerase family. Bacterial CCA-adding enzyme type 1 subfamily. As to quaternary structure, monomer. Can also form homodimers and oligomers. It depends on Mg(2+) as a cofactor. The cofactor is Ni(2+).

It carries out the reaction a tRNA precursor + 2 CTP + ATP = a tRNA with a 3' CCA end + 3 diphosphate. The enzyme catalyses a tRNA with a 3' CCA end + 2 CTP + ATP = a tRNA with a 3' CCACCA end + 3 diphosphate. Functionally, catalyzes the addition and repair of the essential 3'-terminal CCA sequence in tRNAs without using a nucleic acid template. Adds these three nucleotides in the order of C, C, and A to the tRNA nucleotide-73, using CTP and ATP as substrates and producing inorganic pyrophosphate. tRNA 3'-terminal CCA addition is required both for tRNA processing and repair. Also involved in tRNA surveillance by mediating tandem CCA addition to generate a CCACCA at the 3' terminus of unstable tRNAs. While stable tRNAs receive only 3'-terminal CCA, unstable tRNAs are marked with CCACCA and rapidly degraded. The sequence is that of Multifunctional CCA protein from Pseudomonas fluorescens (strain SBW25).